The sequence spans 436 residues: Phosphoribosylamine--glycine ligase (436 aa).

In terms of domain architecture, ATP-grasp spans 106–318 (RKLFEDYDIE…LADVCQAIVD (213 aa)). 133–196 (LDDFDRDVVV…EERLIGEEFT (64 aa)) is an ATP binding site. Mg(2+)-binding residues include Q276, E288, and N290. Residues Q276, E288, and N290 each contribute to the Mn(2+) site.

Belongs to the GARS family. Requires Mg(2+) as cofactor. Mn(2+) serves as cofactor.

The enzyme catalyses 5-phospho-beta-D-ribosylamine + glycine + ATP = N(1)-(5-phospho-beta-D-ribosyl)glycinamide + ADP + phosphate + H(+). It participates in purine metabolism; IMP biosynthesis via de novo pathway; N(1)-(5-phospho-D-ribosyl)glycinamide from 5-phospho-alpha-D-ribose 1-diphosphate: step 2/2. In Methanobrevibacter smithii (strain ATCC 35061 / DSM 861 / OCM 144 / PS), this protein is Phosphoribosylamine--glycine ligase.